Here is a 201-residue protein sequence, read N- to C-terminus: FMN-dependent NADH:quinone oxidoreductase (201 aa).

FMN is bound by residues S10, 16–18, 96–99, and 140–143; these read SQS, MYNF, and SRGG.

Belongs to the azoreductase type 1 family. In terms of assembly, homodimer. It depends on FMN as a cofactor.

It carries out the reaction 2 a quinone + NADH + H(+) = 2 a 1,4-benzosemiquinone + NAD(+). The catalysed reaction is N,N-dimethyl-1,4-phenylenediamine + anthranilate + 2 NAD(+) = 2-(4-dimethylaminophenyl)diazenylbenzoate + 2 NADH + 2 H(+). In terms of biological role, quinone reductase that provides resistance to thiol-specific stress caused by electrophilic quinones. Its function is as follows. Also exhibits azoreductase activity. Catalyzes the reductive cleavage of the azo bond in aromatic azo compounds to the corresponding amines. This Yersinia pseudotuberculosis serotype O:1b (strain IP 31758) protein is FMN-dependent NADH:quinone oxidoreductase.